Here is a 114-residue protein sequence, read N- to C-terminus: Dolichyl-diphosphooligosaccharide--protein glycosyltransferase subunit DAD1 (114 aa).

The Cytoplasmic portion of the chain corresponds to 1–30 (MPKAAGDAKLLIQSLNKAYAATPTNLKIID). The chain crosses the membrane as a helical span at residues 31–51 (LYVVFAVVTALLQVVYMGIVG). Serine 52 is a topological domain (lumenal). The chain crosses the membrane as a helical span at residues 53–73 (FPFNSFLSGVLSCIGTAVLAV). The Cytoplasmic segment spans residues 74–93 (CHRIQVNKDNKEFKDLAPER). A helical membrane pass occupies residues 94–114 (AFADFVLCSLVLHLVIMNFLG).

This sequence belongs to the DAD/OST2 family. As to quaternary structure, component of the oligosaccharyltransferase (OST) complex.

The protein localises to the endoplasmic reticulum membrane. It participates in protein modification; protein glycosylation. Subunit of the oligosaccharyl transferase (OST) complex that catalyzes the initial transfer of a defined glycan (Glc(3)Man(9)GlcNAc(2) in eukaryotes) from the lipid carrier dolichol-pyrophosphate to an asparagine residue within an Asn-X-Ser/Thr consensus motif in nascent polypeptide chains, the first step in protein N-glycosylation. N-glycosylation occurs cotranslationally and the complex associates with the Sec61 complex at the channel-forming translocon complex that mediates protein translocation across the endoplasmic reticulum (ER). All subunits are required for a maximal enzyme activity. The protein is Dolichyl-diphosphooligosaccharide--protein glycosyltransferase subunit DAD1 (DAD1) of Hordeum vulgare (Barley).